Reading from the N-terminus, the 138-residue chain is Small ribosomal subunit protein uS11c (138 aa).

Belongs to the universal ribosomal protein uS11 family. As to quaternary structure, part of the 30S ribosomal subunit.

It localises to the plastid. The sequence is that of Small ribosomal subunit protein uS11c from Cuscuta gronovii (Common dodder).